A 90-amino-acid chain; its full sequence is Putative regulatory protein Dred_1699 (90 aa).

Belongs to the RemA family.

This Desulforamulus reducens (strain ATCC BAA-1160 / DSM 100696 / MI-1) (Desulfotomaculum reducens) protein is Putative regulatory protein Dred_1699.